The chain runs to 536 residues: MSNQPNRIIIFDTTLRDGEQSPGATLNGDEKLTVARALARLGVDVIEAGFPYASPGDFEAVQQIAKVVGVEGGPSICGLARATKADIAKAAEALKPAAKPRIHTFLATSDIHLAYKLKKTRQEVLEIVPEMVAYAKSFVDDVEFSPEDAGRSDPEFLYQVLERAIAAGATTVNIPDTVGYLTPSEFGQLIRGIKENVPNIDQAIISVHGHNDLGLAVANFLEAVKNGARQLECTINGIGERAGNAALEELVMALHVRRQYYNPFLGRPVDSTEPLTNINTKEIYKTSRLVSNLTGMAVQPNKAIVGANAFAHESGIHQDGVLKNKLTYEIMDAESIGLTNNQIVLGKLSGRHAFSTRLKELGFELSETDLNKAFLRFKEVADKKKEITDWDLEAIVNDEIQQAPEVFRLELVQVSCGDQARPTATVILRGPEGQELMDAAIGTGPVDAVYKAINRVVNVPNQLIEFSVKSVTAGIDAMGEVTIRLKYENRIFSGHAANTDIIVASARAYISALNRLYAAIEQEKAEKEKAAVTSAS.

The region spanning 8–269 (IIIFDTTLRD…YYNPFLGRPV (262 aa)) is the Pyruvate carboxyltransferase domain. Mn(2+)-binding residues include aspartate 17, histidine 208, histidine 210, and asparagine 244. The segment at 408-536 (RLELVQVSCG…KEKAAVTSAS (129 aa)) is regulatory domain.

This sequence belongs to the alpha-IPM synthase/homocitrate synthase family. LeuA type 1 subfamily. As to quaternary structure, homodimer. Mn(2+) is required as a cofactor.

The protein localises to the cytoplasm. It carries out the reaction 3-methyl-2-oxobutanoate + acetyl-CoA + H2O = (2S)-2-isopropylmalate + CoA + H(+). It participates in amino-acid biosynthesis; L-leucine biosynthesis; L-leucine from 3-methyl-2-oxobutanoate: step 1/4. Its function is as follows. Catalyzes the condensation of the acetyl group of acetyl-CoA with 3-methyl-2-oxobutanoate (2-ketoisovalerate) to form 3-carboxy-3-hydroxy-4-methylpentanoate (2-isopropylmalate). The chain is 2-isopropylmalate synthase from Gloeothece citriformis (strain PCC 7424) (Cyanothece sp. (strain PCC 7424)).